We begin with the raw amino-acid sequence, 37 residues long: Small ribosomal subunit protein eS32 (37 aa).

This sequence belongs to the eukaryotic ribosomal protein eS32 family. Part of the small ribosomal subunit.

Functionally, interacts with N(4)-acetylcytidine (ac(4)C) 1459 of the small rRNA; the acetyl group of ac(4)C1459 briges the interaction with this protein. This is Small ribosomal subunit protein eS32 (rpl41e) from Thermococcus kodakarensis (strain ATCC BAA-918 / JCM 12380 / KOD1) (Pyrococcus kodakaraensis (strain KOD1)).